We begin with the raw amino-acid sequence, 275 residues long: Large ribosomal subunit protein uL2c (275 aa).

Residues 224–275 (AMNPVDHPHGGGEGRTPIGRKKPVTPWGYSALGKKSRKRNRYSDASILRRRE) form a disordered region.

It belongs to the universal ribosomal protein uL2 family. In terms of assembly, part of the 50S ribosomal subunit.

It is found in the plastid. Its subcellular location is the chloroplast. This is Large ribosomal subunit protein uL2c (rpl2) from Picea abies (Norway spruce).